Consider the following 390-residue polypeptide: Endothelial cell-selective adhesion molecule (390 aa).

The first 29 residues, 1 to 29, serve as a signal peptide directing secretion; sequence MISLPGPLVTNLLRFLFLGLSALAPPSRA. The Ig-like V-type domain occupies 30-143; sequence ELQLHLPANQ…NGQASGHSIK (114 aa). Topologically, residues 30–248 are extracellular; it reads ELQLHLPANQ…LEVSTGPGAA (219 aa). 4 N-linked (GlcNAc...) asparagine glycosylation sites follow: N108, N169, N213, and N236. In terms of domain architecture, Ig-like C2-type spans 156–242; the sequence is PSCRLQGVPR…AQCNVTLEVS (87 aa). C174 and C224 are disulfide-bonded. A helical transmembrane segment spans residues 249–269; it reads VVAGAVVGTLVGLGLLAGLVL. The Cytoplasmic portion of the chain corresponds to 270–390; that stretch reads LYHRRGKALE…PAQSQAGSLV (121 aa). At S301 the chain carries Phosphoserine. A disordered region spans residues 316-365; that stretch reads ARALRPPHGPPRPGALTPTPSLSSQALPSPRLPTTDGANPQPISLIPGGV. T332 and T334 each carry phosphothreonine. Over residues 333–342 the composition is skewed to polar residues; the sequence is PTPSLSSQAL. Residues S336, S339, S344, and S371 each carry the phosphoserine modification.

As to quaternary structure, interacts with MAGI1.

The protein localises to the cell junction. Its subcellular location is the adherens junction. It is found in the tight junction. It localises to the cell membrane. Can mediate aggregation most likely through a homophilic molecular interaction. This is Endothelial cell-selective adhesion molecule (ESAM) from Macaca fascicularis (Crab-eating macaque).